Here is a 197-residue protein sequence, read N- to C-terminus: MEKQHSLIFLTGFSGSGKSSIGPLLANSLGYDFIDIDSAIEEQEGKTITRIFAEEGERAFRKLEQAMIATIAERKEMVASLGGGALEHTPTFELISTTGTLVYLKSDPKNLAKRLFHKTDRPLLRSSGTEKPDREALERNISAILEKRSPRYESAAITVYTDQKRIGSTVEELTRKIERFVRKQSSIEQNDQHKDRP.

15–20 provides a ligand contact to ATP; that stretch reads GSGKSS. Mg(2+) is bound at residue S19. Residues D37, R61, and G83 each contribute to the substrate site. R121 provides a ligand contact to ATP. Residue R148 coordinates substrate.

The protein belongs to the shikimate kinase family. In terms of assembly, monomer. It depends on Mg(2+) as a cofactor.

It localises to the cytoplasm. It catalyses the reaction shikimate + ATP = 3-phosphoshikimate + ADP + H(+). Its pathway is metabolic intermediate biosynthesis; chorismate biosynthesis; chorismate from D-erythrose 4-phosphate and phosphoenolpyruvate: step 5/7. Functionally, catalyzes the specific phosphorylation of the 3-hydroxyl group of shikimic acid using ATP as a cosubstrate. This is Shikimate kinase from Chlorobium phaeovibrioides (strain DSM 265 / 1930) (Prosthecochloris vibrioformis (strain DSM 265)).